The primary structure comprises 147 residues: Fibromodulin (147 aa).

6 LRR repeats span residues 1–15 (LDHN…PLPR), 16–37 (SLRE…ALEG), 40–61 (NLTA…MRGL), 63–84 (SLIL…LPSA), 85–105 (LEQL…YFRG), and 108–128 (KLLY…ASNT). An N-linked (GlcNAc...) (keratan sulfate) asparagine glycan is attached at Asn-5. A glycan (N-linked (GlcNAc...) (keratan sulfate) asparagine) is linked at Asn-40. Residue Asn-130 is glycosylated (N-linked (GlcNAc...) (keratan sulfate) asparagine). Residues 133 to 147 (SLLELDLSYNQLQKI) form an LRR 7 repeat.

It belongs to the small leucine-rich proteoglycan (SLRP) family. SLRP class II subfamily. As to quaternary structure, binds to type I and type II collagen. Post-translationally, binds keratan sulfate chains.

It is found in the secreted. The protein localises to the extracellular space. Its subcellular location is the extracellular matrix. In terms of biological role, affects the rate of fibrils formation. May have a primary role in collagen fibrillogenesis. This Sus scrofa (Pig) protein is Fibromodulin (FMOD).